A 537-amino-acid polypeptide reads, in one-letter code: Beta-arabinofuranosyltransferase RAY1 (537 aa).

Residues 370–372 carry the DXD motif motif; that stretch reads DVD.

Belongs to the glycosyltransferase 77 family.

Functionally, beta-arabinofuranosyltransferase that transfers specifically an arabinosyl residue from UDP-arabinofuranose to the monosaccharide galactose or beta-methyl-galactoside in vitro. Catalyzes the addition of a beta-arabinofuranose residue onto a beta-galactosyl residue of an Yariv-precipitable wall polymer in vivo. The polypeptide is Beta-arabinofuranosyltransferase RAY1 (Arabidopsis thaliana (Mouse-ear cress)).